An 831-amino-acid chain; its full sequence is Sodium/hydrogen exchanger 3 (831 aa).

A signal peptide spans 1 to 28; it reads MWHPALGPGWKPLLALALALTSLRGVRG. The Extracellular segment spans residues 29–48; that stretch reads IEEEPNSGGSFQIVTFKWHH. Residues 49–71 traverse the membrane as a helical segment; the sequence is VQDPYIIALWILVASLAKIVFHL. Residues 72 to 79 lie on the Cytoplasmic side of the membrane; that stretch reads SHKVTSVV. A helical membrane pass occupies residues 80 to 99; it reads PESALLIVLGLVLGGIVWAA. Topologically, residues 100–108 are extracellular; it reads DHIASFTLT. Residues 109-126 form a helical membrane-spanning segment; that stretch reads PTLFFFYLLPPIVLDAGY. Residues 127-129 are Cytoplasmic-facing; that stretch reads FMP. Residues 130–165 form a helical membrane-spanning segment; that stretch reads NRLFFGNLGTILLYAVIGTIWNAATTGLSLYGVFLS. Residues Gly-135, Gly-138, and Thr-139 each coordinate a 1,2-diacyl-sn-glycero-3-phospho-(1D-myo-inositol). The Extracellular segment spans residues 166–178; it reads GLMGELKIGLLDF. Residues 179–200 traverse the membrane as a helical segment; the sequence is LLFGSLIAAVDPVAVLAVFEEV. Residues 201-202 lie on the Cytoplasmic side of the membrane; it reads HV. Residues 203 to 234 form a helical membrane-spanning segment; sequence NEVLFIIVFGESLLNDAVTVVLYNVFESFVTL. At 235 to 241 the chain is on the extracellular side; it reads GGDAVTG. A helical transmembrane segment spans residues 242–276; that stretch reads VDCVKGIVSFFVVSLGGTLVGVIFAFLLSLVTRFT. At 277-278 the chain is on the cytoplasmic side; the sequence is KH. Residues 279-301 traverse the membrane as a helical segment; sequence VRIIEPGFVFVISYLSYLTSEML. Residues 302 to 303 are Extracellular-facing; sequence SL. A helical membrane pass occupies residues 304 to 320; that stretch reads SAILAITFCGICCQKYV. Residues 321–327 lie on the Cytoplasmic side of the membrane; the sequence is KANISEQ. The chain crosses the membrane as a helical span at residues 328–356; that stretch reads SATTVRYTMKMLASGAETIIFMFLGISAV. The Extracellular portion of the chain corresponds to 357 to 364; the sequence is DPVIWTWN. Residues 365–386 form a helical membrane-spanning segment; the sequence is TAFVLLTLVFISVYRAIGVVLQ. Over 387–399 the chain is Cytoplasmic; sequence TWILNRYRMVQLE. A 1,2-diacyl-sn-glycero-3-phospho-(1D-myo-inositol) is bound at residue Met-395. A helical transmembrane segment spans residues 400 to 423; sequence TIDQVVMSYGGLRGAVAYALVVLL. At 424 to 430 the chain is on the extracellular side; it reads DEKKVKE. Residues 431–464 traverse the membrane as a helical segment; that stretch reads KNLFVSTTLIVVFFTVIFQGLTIKPLVQWLKVKR. Residues 465 to 831 lie on the Cytoplasmic side of the membrane; it reads SEQREPKLNE…QPASPESTHM (367 aa). Positions 494, 495, and 497 each coordinate a 1,2-diacyl-sn-glycero-3-phospho-(1D-myo-inositol). 2 positions are modified to phosphoserine: Ser-552 and Ser-560. An interaction with EZR region spans residues 573–587; that stretch reads RPSTVEASVSYFLRE. Residues 588 to 665 form an interaction with NHERF4 region; it reads NVSAVCLDMQ…RKRLESFKSA (78 aa). The interaction with AHCYL1 stretch occupies residues 589 to 693; it reads VSAVCLDMQS…AQKRRNSSIP (105 aa). Ser-590 and Ser-605 each carry phosphoserine. Ser-661 is modified (phosphoserine; by SGK1). Ser-716, Ser-807, and Ser-810 each carry phosphoserine. Residues 808–831 form a disordered region; it reads VDSFLQADGPEEQLQPASPESTHM. Over residues 822 to 831 the composition is skewed to polar residues; sequence QPASPESTHM.

Belongs to the monovalent cation:p,roton antiporter 1 (CPA1) transporter (TC 2.A.36) family. As to quaternary structure, homodimer. Found in the forms of complex and dynamic macromolecular complexes. Binds NHERF1 and NHERF2. Interacts with NHERF4 and interactions decrease in response to elevated calcium ion levels. Interacts with PDZK1 (via C-terminal PDZ domain). Interacts with CHP1; this interaction increases trafficking and activity at the plasma membrane of SLC9A3. Interacts with CHP2 and SHANK2. Interacts with AHCYL1; the interaction is required for SLC9A3 activity. Interacts with EZR; interaction targets SLC9A3 to the apical membrane. Interacts with SNX27 (via PDZ domains); directs SLC9A3 membrane insertion from early endosomes to the plasma membrane. Post-translationally, phosphorylated by PRKACA at Ser-552 and Ser-605, which inhibits activity. Phosphorylation of Ser-605 is essential for cAMP-mediated inhibition of SLC9A3. Phosphorylation at Ser-661 by SGK1 is associated with increased abundance at the cell membrane. Phosphorylation at Ser-716 by CSNK2A1 regulates SLC9A3 activity through the formation of multiple signaling complexes. Most abundant in colon and small intestine, followed by kidney and stomach. In kidney, expressed in proximal tubules and outer medulla (at protein level).

The protein localises to the apical cell membrane. Its subcellular location is the cell membrane. The protein resides in the recycling endosome membrane. It localises to the early endosome membrane. It carries out the reaction Na(+)(in) + H(+)(out) = Na(+)(out) + H(+)(in). Seems to switch between active and inactive modes in response to various stimuli. Activated directly or indirectly by membrane phosphatidylinositol (PIs). Regulated by a variety of auxiliary proteins, which facilitate the maturation, cell surface expression and function of the transporter. Inhibited specifically by the drug tenapanor. Functionally, plasma membrane Na(+)/H(+) antiporter. Exchanges intracellular H(+) ions for extracellular Na(+) in 1:1 stoichiometry, playing a key role in salt and fluid absorption and pH homeostasis. Major apical Na(+)/H(+) exchanger in kidney and intestine playing an important role in renal and intestine Na(+) absorption and blood pressure regulation. The polypeptide is Sodium/hydrogen exchanger 3 (Slc9a3) (Rattus norvegicus (Rat)).